Reading from the N-terminus, the 222-residue chain is Small ribosomal subunit protein uS3 (222 aa).

The KH type-2 domain occupies 39-108; it reads IRKFIKKELF…NVLINIVEVK (70 aa).

The protein belongs to the universal ribosomal protein uS3 family. In terms of assembly, part of the 30S ribosomal subunit. Forms a tight complex with proteins S10 and S14.

Functionally, binds the lower part of the 30S subunit head. Binds mRNA in the 70S ribosome, positioning it for translation. In Clostridium perfringens (strain ATCC 13124 / DSM 756 / JCM 1290 / NCIMB 6125 / NCTC 8237 / Type A), this protein is Small ribosomal subunit protein uS3.